We begin with the raw amino-acid sequence, 236 residues long: MNDSNDTSVAGGAAGADSRVLSADSALTERQRTILDVIRASVTSRGYPPSIREIGDAVGLTSTSSVAHQLRTLERKGYLRRDPNRPRAVNVRGADDAALPPVTEVAGSDALPEPTFAPVLGRIAAGGPILAEEAVEDVFPLPRELVGEGTLFLLKVIGDSMVEAAICDGDWVVVRQQNVADNGDIVAAMIDGEATVKTFKRAGGQVWLMPHNPAFDPIPGNDATVLGKVVTVIRKV.

The disordered stretch occupies residues 1-25 (MNDSNDTSVAGGAAGADSRVLSADS). The segment at residues 51–71 (IREIGDAVGLTSTSSVAHQLR) is a DNA-binding region (H-T-H motif). Catalysis depends on for autocatalytic cleavage activity residues S160 and K197.

It belongs to the peptidase S24 family. As to quaternary structure, homodimer.

It carries out the reaction Hydrolysis of Ala-|-Gly bond in repressor LexA.. Its function is as follows. Represses a number of genes involved in the response to DNA damage (SOS response), including recA and lexA. In the presence of single-stranded DNA, RecA interacts with LexA causing an autocatalytic cleavage which disrupts the DNA-binding part of LexA, leading to derepression of the SOS regulon and eventually DNA repair. The sequence is that of LexA repressor from Mycobacterium bovis (strain BCG / Pasteur 1173P2).